The chain runs to 317 residues: MGTYYRRKDQFLLAKIHEAEARMTGEDSSGSSARIRRRSALDHFVRQEMDAAARAGRAPDFLHGPIRDELLGYIIAGHDSSTSALSWALKYLTTDARVQHALRQHLHAVHAASWREGRTPSVAEITSIRAPYLDAVIQEVFRCAYTTPFTLREATRDTQIMGHFVPKGTTVWFSTSGPSFTRPAIETDRKTSSHSRSPTALADKQRVPAWSPQDVALFRPERWLRPDPGPSDPPDFAYSHVDFNGNAGPMMAFGSGPRGCCGKRLVYLSMRILVTLVLWDFDLLPCPTRLSSDESNHGTASHPKQCYLRLATTTHGP.

A disordered region spans residues 183-205 (PAIETDRKTSSHSRSPTALADKQ). Cys260 lines the heme pocket.

The protein belongs to the cytochrome P450 family. Requires heme as cofactor.

It functions in the pathway secondary metabolite biosynthesis. Functionally, cytochrome P450 monooxygenase; part of the hps1-dma1 gene cluster that probably mediates the biosynthesis a derivative of cyclopiazonic acid (CPA). The hybrid polyketide synthase-nonribosomal peptide synthetase (PKS-NRPS) nps1 might incorporates acetyl-CoA, malonyl-CoA, and tryptophan (Trp) and utilizes a C-terminal redox-incompetent reductase domain to make and release the tryptophan tetramic acid, cyclo-acetoacetyl-L-tryptophan (c-AATrp), as the first intermediate in the pathway. In addition, the cluster also includes the tryptophan dimethylallyltransferase dma1, the FAD-dependent oxidoreductase toxD, the cytochrome P450 monooxygenase cyp3.1 and the methyltransferase DOTSEDRAFT_139328; the latter 2 being not present in all CPA-producing fungi but involved in additional modifications that occur in biosynthesis the of a range of CPA and CPA-like products. Further studies are required to clarify whether the CPA-like hps1-dma1 cluster is functional or a non-functional relic reflecting evolution of D.septosporum. The chain is Hps1-dma1 cluster cytochrome P450 monooxygenase cyp3.1 (cyp3.1) from Dothistroma septosporum (strain NZE10 / CBS 128990) (Red band needle blight fungus).